The sequence spans 192 residues: MPVSDSLSPDLPNDDTSEEWLEVGTIVGAHGLNGEVKVYPDSDFPERFTQPGLRWLVSPTEASTPEEIQLIRGRFVERKGIYVVKLANVNFRDQSEALKGTKLLVRSNDRPTLAEGEYYLSDLIGVTVVDHQTQAVVGSVVSLASAGNDLLEIQLDNTTKTILLPFVSALVPIVDIATKRIEITPPKGLIPE.

A PRC barrel domain is found at 115–189 (EGEYYLSDLI…RIEITPPKGL (75 aa)).

It belongs to the RimM family. Binds ribosomal protein uS19.

Its subcellular location is the cytoplasm. Functionally, an accessory protein needed during the final step in the assembly of 30S ribosomal subunit, possibly for assembly of the head region. Essential for efficient processing of 16S rRNA. May be needed both before and after RbfA during the maturation of 16S rRNA. It has affinity for free ribosomal 30S subunits but not for 70S ribosomes. The protein is Ribosome maturation factor RimM of Acaryochloris marina (strain MBIC 11017).